Consider the following 124-residue polypeptide: Keratin-associated protein 12-2 (124 aa).

20 tandem repeats follow at residues 10 to 13, 14 to 18, 19 to 23, 24 to 28, 33 to 38, 39 to 43, 44 to 48, 49 to 52, 53 to 57, 58 to 62, 63 to 67, 68 to 72, 73 to 77, 78 to 82, 83 to 87, 88 to 92, 98 to 102, 103 to 107, 108 to 112, and 113 to 117. The segment at 10–117 is 20 X 5 AA approximate repeats; sequence CQAACVPSSC…CPTLVYRPIS (108 aa).

Belongs to the KRTAP type 12 family. As to quaternary structure, interacts with hair keratins.

Its function is as follows. In the hair cortex, hair keratin intermediate filaments are embedded in an interfilamentous matrix, consisting of hair keratin-associated proteins (KRTAP), which are essential for the formation of a rigid and resistant hair shaft through their extensive disulfide bond cross-linking with abundant cysteine residues of hair keratins. The matrix proteins include the high-sulfur and high-glycine-tyrosine keratins. This is Keratin-associated protein 12-2 from Bos taurus (Bovine).